Here is a 149-residue protein sequence, read N- to C-terminus: Protein SprT-like (149 aa).

One can recognise a SprT-like domain in the interval 4–143 (TDYVKQVSLE…CGLCRGKLLL (140 aa)). His-64 lines the Zn(2+) pocket. The active site involves Glu-65. His-68 provides a ligand contact to Zn(2+).

This sequence belongs to the SprT family. Requires Zn(2+) as cofactor.

It localises to the cytoplasm. This Streptococcus pneumoniae (strain JJA) protein is Protein SprT-like.